A 481-amino-acid polypeptide reads, in one-letter code: Glutamyl-tRNA(Gln) amidotransferase subunit A (481 aa).

Catalysis depends on charge relay system residues Lys74 and Ser149. The active-site Acyl-ester intermediate is Ser173.

This sequence belongs to the amidase family. GatA subfamily. Heterotrimer of A, B and C subunits.

The catalysed reaction is L-glutamyl-tRNA(Gln) + L-glutamine + ATP + H2O = L-glutaminyl-tRNA(Gln) + L-glutamate + ADP + phosphate + H(+). Allows the formation of correctly charged Gln-tRNA(Gln) through the transamidation of misacylated Glu-tRNA(Gln) in organisms which lack glutaminyl-tRNA synthetase. The reaction takes place in the presence of glutamine and ATP through an activated gamma-phospho-Glu-tRNA(Gln). The chain is Glutamyl-tRNA(Gln) amidotransferase subunit A from Francisella tularensis subsp. mediasiatica (strain FSC147).